Consider the following 262-residue polypeptide: Deaminated glutathione amidase (262 aa).

Residues methionine 1 to proline 238 enclose the CN hydrolase domain. Glutamate 40 functions as the Proton acceptor in the catalytic mechanism. Lysine 110 serves as the catalytic Proton donor. Cysteine 147 serves as the catalytic Nucleophile.

The protein belongs to the carbon-nitrogen hydrolase superfamily. NIT1/NIT2 family.

It carries out the reaction N-(4-oxoglutaryl)-L-cysteinylglycine + H2O = L-cysteinylglycine + 2-oxoglutarate. Its function is as follows. Hydrolyzes deaminated glutathione (dGSH) to 2-oxoglutarate and L-cysteinylglycine, and no activity on glutathione or L-glutamine. May function as a metabolite repair enzyme. The polypeptide is Deaminated glutathione amidase (ybeM) (Escherichia coli O157:H7).